A 477-amino-acid chain; its full sequence is Myc-associated zinc finger protein (477 aa).

2 disordered regions span residues 59–78 and 121–144; these read AQSP…APAA and TVDT…SAPA. Residues 130 to 140 are compositionally biased toward pro residues; the sequence is PPAPPPPPPAV. 4 C2H2-type zinc fingers span residues 190-212, 279-301, 307-329, and 337-360; these read YICA…EAIH, HACE…KLSH, YQCP…VRSH, and YNCS…RQVH. S361 is subject to Phosphoserine. A C2H2-type 5 zinc finger spans residues 366-388; the sequence is FKCEKCEAAFATKDRLRAHTVRH. A C2H2-type 6; atypical zinc finger spans residues 392-413; it reads VPCHVCGKMLSSAYISDHMKVH.

As to quaternary structure, interacts with BPTF. Expressed in Purkinje cells in the brain (at protein level).

The protein resides in the nucleus. Functionally, transcriptional regulator. Acts as a transcriptional activator that binds to purine-rich GAGA sites found in the promoter of many genes including insulin I and II and islet amyloid polypeptide. The chain is Myc-associated zinc finger protein (Maz) from Mus musculus (Mouse).